We begin with the raw amino-acid sequence, 438 residues long: Dolichyl-diphosphooligosaccharide--protein glycosyltransferase 48 kDa subunit (438 aa).

Positions 1–25 (MASLRLSVLLVSVSWLLLLVSGLRA) are cleaved as a signal peptide. Topologically, residues 26–408 (GPRTLVLMEN…QYERFIPSAY (383 aa)) are lumenal. A helical membrane pass occupies residues 409–429 (PYYASAFSVMFGLFIFSIVFL). Residues 430–438 (HMKEKEKSD) lie on the Cytoplasmic side of the membrane.

The protein belongs to the DDOST 48 kDa subunit family. Component of the oligosaccharyltransferase (OST) complex.

The protein resides in the endoplasmic reticulum membrane. The protein operates within protein modification; protein glycosylation. Subunit of the oligosaccharyl transferase (OST) complex that catalyzes the initial transfer of a defined glycan (Glc(3)Man(9)GlcNAc(2) in eukaryotes) from the lipid carrier dolichol-pyrophosphate to an asparagine residue within an Asn-X-Ser/Thr consensus motif in nascent polypeptide chains, the first step in protein N-glycosylation. N-glycosylation occurs cotranslationally and the complex associates with the Sec61 complex at the channel-forming translocon complex that mediates protein translocation across the endoplasmic reticulum (ER). All subunits are required for a maximal enzyme activity. Required for the assembly of both SST3A- and SS3B-containing OST complexes. The protein is Dolichyl-diphosphooligosaccharide--protein glycosyltransferase 48 kDa subunit of Xenopus laevis (African clawed frog).